The primary structure comprises 361 residues: Peptide chain release factor 1 (361 aa).

Gln235 bears the N5-methylglutamine mark.

It belongs to the prokaryotic/mitochondrial release factor family. Methylated by PrmC. Methylation increases the termination efficiency of RF1.

Its subcellular location is the cytoplasm. In terms of biological role, peptide chain release factor 1 directs the termination of translation in response to the peptide chain termination codons UAG and UAA. The sequence is that of Peptide chain release factor 1 from Chlamydia felis (strain Fe/C-56) (Chlamydophila felis).